The chain runs to 308 residues: Homeobox protein HMX3 (308 aa).

Disordered stretches follow at residues 1–57 (MPET…GFAL) and 107–184 (AEKS…KKKT). The segment covering 9–19 (PSAPPPPPPPK) has biased composition (pro residues). 2 stretches are compositionally biased toward basic and acidic residues: residues 135-144 (AEQKERDPKS) and 156-177 (EEGKKEGGAEDWKKREESPEKK). The segment at residues 181–240 (KKKTRTVFSRSQVFQLESTFDMKRYLSSSERAGLAASLHLTETQVKIWFQNRRNKWKRQL) is a DNA-binding region (homeobox).

The protein belongs to the HMX homeobox family.

Its subcellular location is the nucleus. Functionally, transcription factor involved in specification of neuronal cell types and which is required for inner ear and hypothalamus development. Binds to the 5'-CAAGTG-3' core sequence. This chain is Homeobox protein HMX3 (HMX3), found in Gallus gallus (Chicken).